Consider the following 178-residue polypeptide: ATP-dependent protease subunit HslV (178 aa).

The active site involves Thr-7. Gly-162, Cys-165, and Thr-168 together coordinate Na(+).

It belongs to the peptidase T1B family. HslV subfamily. As to quaternary structure, a double ring-shaped homohexamer of HslV is capped on each side by a ring-shaped HslU homohexamer. The assembly of the HslU/HslV complex is dependent on binding of ATP.

Its subcellular location is the cytoplasm. The catalysed reaction is ATP-dependent cleavage of peptide bonds with broad specificity.. Allosterically activated by HslU binding. Protease subunit of a proteasome-like degradation complex believed to be a general protein degrading machinery. This is ATP-dependent protease subunit HslV from Burkholderia ambifaria (strain ATCC BAA-244 / DSM 16087 / CCUG 44356 / LMG 19182 / AMMD) (Burkholderia cepacia (strain AMMD)).